Reading from the N-terminus, the 198-residue chain is Large ribosomal subunit protein eL18 (198 aa).

The disordered stretch occupies residues 157–198 (RHFGASGVPGSHSKPYATNRGKETKRGRRTGRSYKRKAFRHV). A compositionally biased stretch (basic residues) spans 179 to 198 (ETKRGRRTGRSYKRKAFRHV).

The protein belongs to the eukaryotic ribosomal protein eL18 family.

It localises to the cytoplasm. The sequence is that of Large ribosomal subunit protein eL18 (RPL18-A) from Leishmania major.